A 445-amino-acid polypeptide reads, in one-letter code: MVQTSTNKINHFESANKVLYEGKDSKNPLAFKYYNPEEVVGGKTMKDQLRFSVAYWHTFTADGTDPFGAATMQRSWDRYDGMDLAKARVEAAFQLFETLNVPFFAFHDRDIAPEGSTLQETNKNLDVIVTMIKEYMQTSNVKLLWNTANMFTNPRFVHGAATSCNADVFAYAAAQVKKGLETAKELGAENYVFWGGREGYETLLNTNLQLELDNLARFMHMAVDYATEIGYTGQFLIEPKPKEPTTHQYDTDAATTISFLRQYGLDKYFKLNLEANHATLAGHTFEHELRVARVQGLLGSVDANQGDPLLGWDTDEFPTDLYSTTLAMYEILQNGGLGSGGLNFDAKVRRGSFEQDDLLYAHVAGMDAFARGLKVAHKLVEDRVFENVINERYSSFKEGIGLEIVEGKANFHTLEQYAFKNPNIANKSGRQERLKSILNQYILEV.

Residues His-107 and Asp-110 contribute to the active site. Residues Glu-238, Glu-274, His-277, Asp-302, Asp-313, Asp-315, and Asp-345 each contribute to the Mg(2+) site.

It belongs to the xylose isomerase family. In terms of assembly, homotetramer. Requires Mg(2+) as cofactor.

It localises to the cytoplasm. The catalysed reaction is alpha-D-xylose = alpha-D-xylulofuranose. The chain is Xylose isomerase (xylA) from Priestia megaterium (strain DSM 319 / IMG 1521) (Bacillus megaterium).